A 99-amino-acid chain; its full sequence is Small ribosomal subunit protein uS19c (99 aa).

It belongs to the universal ribosomal protein uS19 family.

The protein resides in the plastid. It is found in the chloroplast. In terms of biological role, protein S19 forms a complex with S13 that binds strongly to the 16S ribosomal RNA. The chain is Small ribosomal subunit protein uS19c from Oenothera biennis (German evening primrose).